Reading from the N-terminus, the 296-residue chain is Acetaldehyde dehydrogenase (296 aa).

Serine 15–isoleucine 18 contacts NAD(+). Cysteine 132 (acyl-thioester intermediate) is an active-site residue. NAD(+) contacts are provided by residues serine 164–asparagine 172 and asparagine 274.

It belongs to the acetaldehyde dehydrogenase family. In terms of assembly, interacts with MhpE.

It carries out the reaction acetaldehyde + NAD(+) + CoA = acetyl-CoA + NADH + H(+). It functions in the pathway aromatic compound metabolism; 3-phenylpropanoate degradation. Its function is as follows. Catalyzes the conversion of acetaldehyde to acetyl-CoA, using NAD(+) and coenzyme A. Is the final enzyme in the meta-cleavage pathway for the degradation of aromatic compounds. The chain is Acetaldehyde dehydrogenase from Pectobacterium atrosepticum (strain SCRI 1043 / ATCC BAA-672) (Erwinia carotovora subsp. atroseptica).